The primary structure comprises 304 residues: Rhomboid-like protein 19 (304 aa).

6 consecutive transmembrane segments (helical) span residues 23–43, 58–78, 93–113, 120–140, 158–175, and 179–198; these read LVVGHLVVQFIPATVPYLALI, GYFELSVYGVVFSTVSLLFMG, FIFVVNFLTYLCVFVTAIALY, VYLYMPFAGFHGVLAGLLVGI, WLPSIMLILSIASSFFTL, and AYLPTLIFGTYMGWLYLRYL. The interval 247 to 304 is disordered; the sequence is SEDHDYSTSGAPLPGSDSAEASRRRERGARALEERLGTERLVPARNKDELQSDGLDNV. The span at 266-284 shows a compositional bias: basic and acidic residues; sequence EASRRRERGARALEERLGT.

The protein belongs to the peptidase S54 family.

The protein resides in the membrane. Functionally, probable rhomboid-type serine protease that catalyzes intramembrane proteolysis. The chain is Rhomboid-like protein 19 from Arabidopsis thaliana (Mouse-ear cress).